A 340-amino-acid chain; its full sequence is Ferrochelatase (340 aa).

The Fe cation site is built by histidine 202 and glutamate 283.

Belongs to the ferrochelatase family.

It localises to the cytoplasm. It catalyses the reaction heme b + 2 H(+) = protoporphyrin IX + Fe(2+). It functions in the pathway porphyrin-containing compound metabolism; protoheme biosynthesis; protoheme from protoporphyrin-IX: step 1/1. In terms of biological role, catalyzes the ferrous insertion into protoporphyrin IX. This chain is Ferrochelatase, found in Acinetobacter baylyi (strain ATCC 33305 / BD413 / ADP1).